The following is a 392-amino-acid chain: Phosphoglycerate kinase (392 aa).

Residues 21-23 (DFN), Arg-36, 59-62 (HLGR), Arg-118, and Arg-151 each bind substrate. ATP-binding positions include Lys-201, Gly-292, Glu-323, and 349–352 (GGDS).

It belongs to the phosphoglycerate kinase family. Monomer.

The protein localises to the cytoplasm. It catalyses the reaction (2R)-3-phosphoglycerate + ATP = (2R)-3-phospho-glyceroyl phosphate + ADP. It functions in the pathway carbohydrate degradation; glycolysis; pyruvate from D-glyceraldehyde 3-phosphate: step 2/5. This is Phosphoglycerate kinase from Borrelia turicatae (strain 91E135).